A 572-amino-acid polypeptide reads, in one-letter code: Formate--tetrahydrofolate ligase (572 aa).

An ATP-binding site is contributed by 65–72; that stretch reads TPLGEGKT.

This sequence belongs to the formate--tetrahydrofolate ligase family.

The enzyme catalyses (6S)-5,6,7,8-tetrahydrofolate + formate + ATP = (6R)-10-formyltetrahydrofolate + ADP + phosphate. The protein operates within one-carbon metabolism; tetrahydrofolate interconversion. This is Formate--tetrahydrofolate ligase from Chloroflexus aurantiacus (strain ATCC 29366 / DSM 635 / J-10-fl).